The following is a 959-amino-acid chain: Glycine dehydrogenase (decarboxylating) (959 aa).

Lys708 is modified (N6-(pyridoxal phosphate)lysine).

It belongs to the GcvP family. The glycine cleavage system is composed of four proteins: P, T, L and H. The cofactor is pyridoxal 5'-phosphate.

The enzyme catalyses N(6)-[(R)-lipoyl]-L-lysyl-[glycine-cleavage complex H protein] + glycine + H(+) = N(6)-[(R)-S(8)-aminomethyldihydrolipoyl]-L-lysyl-[glycine-cleavage complex H protein] + CO2. In terms of biological role, the glycine cleavage system catalyzes the degradation of glycine. The P protein binds the alpha-amino group of glycine through its pyridoxal phosphate cofactor; CO(2) is released and the remaining methylamine moiety is then transferred to the lipoamide cofactor of the H protein. In Yersinia pseudotuberculosis serotype O:1b (strain IP 31758), this protein is Glycine dehydrogenase (decarboxylating).